The primary structure comprises 192 residues: MKLWVGLGNPEPGMARNRHNIGFMAIDVIADRHGFAPWRKRFSGLVSEGSVGGEKIVALKPLTYMNESGRAVQPASAFFKLPPDAVTVFHDELDLIPGKVRVKRGGGAAGHNGLRSIDRTLGTQDYWRVRLGIGHPGDKARVHGHVLGNFAKTDEDWLVDTLEAVSDAAPLLAAGKPEDFMTKVALLTKDTA.

Histidine 19 (proton acceptor) is an active-site residue. Residues tyrosine 64, asparagine 66, and asparagine 112 each contribute to the tRNA site.

Belongs to the PTH family. As to quaternary structure, monomer.

It is found in the cytoplasm. It catalyses the reaction an N-acyl-L-alpha-aminoacyl-tRNA + H2O = an N-acyl-L-amino acid + a tRNA + H(+). In terms of biological role, hydrolyzes ribosome-free peptidyl-tRNAs (with 1 or more amino acids incorporated), which drop off the ribosome during protein synthesis, or as a result of ribosome stalling. Functionally, catalyzes the release of premature peptidyl moieties from peptidyl-tRNA molecules trapped in stalled 50S ribosomal subunits, and thus maintains levels of free tRNAs and 50S ribosomes. This chain is Peptidyl-tRNA hydrolase, found in Acidiphilium cryptum (strain JF-5).